A 255-amino-acid polypeptide reads, in one-letter code: Large ribosomal subunit protein uL4 (255 aa).

Belongs to the universal ribosomal protein uL4 family. In terms of assembly, part of the 50S ribosomal subunit.

Functionally, one of the primary rRNA binding proteins, this protein initially binds near the 5'-end of the 23S rRNA. It is important during the early stages of 50S assembly. It makes multiple contacts with different domains of the 23S rRNA in the assembled 50S subunit and ribosome. Forms part of the polypeptide exit tunnel. The chain is Large ribosomal subunit protein uL4 from Pyrococcus furiosus (strain ATCC 43587 / DSM 3638 / JCM 8422 / Vc1).